Reading from the N-terminus, the 714-residue chain is Polyribonucleotide nucleotidyltransferase (714 aa).

Mg(2+) contacts are provided by Asp489 and Asp495. In terms of domain architecture, KH spans 556-615; it reads PKIDTIKIDVDKIKVVIGKGGETIDKIIAETGVKIDIDEEGNVSIYSSDQDAINRAKEII. The 69-residue stretch at 625 to 693 folds into the S1 motif domain; that stretch reads GEVYHAKVVR…DKGRIDASMK (69 aa). The interval 691–714 is disordered; sequence SMKALVPRPPKPEKSEAKKEGKHD. Over residues 700–714 the composition is skewed to basic and acidic residues; sequence PKPEKSEAKKEGKHD.

It belongs to the polyribonucleotide nucleotidyltransferase family. Mg(2+) is required as a cofactor.

It is found in the cytoplasm. It carries out the reaction RNA(n+1) + phosphate = RNA(n) + a ribonucleoside 5'-diphosphate. Functionally, involved in mRNA degradation. Catalyzes the phosphorolysis of single-stranded polyribonucleotides processively in the 3'- to 5'-direction. In Streptococcus equi subsp. zooepidemicus (strain MGCS10565), this protein is Polyribonucleotide nucleotidyltransferase.